The chain runs to 73 residues: Guanine nucleotide-binding protein G(I)/G(S)/G(O) subunit gamma-11 (73 aa).

The segment at 51–73 is disordered; sequence DPLVKGIPEDKNPFKEKGSCVIS. Residue Cys70 is modified to Cysteine methyl ester. Cys70 is lipidated: S-farnesyl cysteine. A propeptide spans 71-73 (removed in mature form); the sequence is VIS.

The protein belongs to the G protein gamma family. G proteins are composed of 3 units, alpha, beta and gamma. Interacts with beta-1 and beta-3, but not with beta-2. As to expression, abundantly expressed in all tissues tested except for brain.

Its subcellular location is the cell membrane. In terms of biological role, guanine nucleotide-binding proteins (G proteins) are involved as a modulator or transducer in various transmembrane signaling systems. The beta and gamma chains are required for the GTPase activity, for replacement of GDP by GTP, and for G protein-effector interaction. This Homo sapiens (Human) protein is Guanine nucleotide-binding protein G(I)/G(S)/G(O) subunit gamma-11 (GNG11).